The sequence spans 881 residues: DNA mismatch repair protein MutS (881 aa).

Residue G627 to S634 participates in ATP binding.

Belongs to the DNA mismatch repair MutS family.

Its function is as follows. This protein is involved in the repair of mismatches in DNA. It is possible that it carries out the mismatch recognition step. This protein has a weak ATPase activity. In Acinetobacter baumannii (strain AB307-0294), this protein is DNA mismatch repair protein MutS.